Consider the following 453-residue polypeptide: Ribulose bisphosphate carboxylase large chain (453 aa).

Residues 1 to 2 (MS) constitute a propeptide that is removed on maturation. Pro-3 bears the N-acetylproline mark. Residue Lys-14 is modified to N6,N6,N6-trimethyllysine. Residues Asn-123 and Thr-173 each contribute to the substrate site. Lys-175 serves as the catalytic Proton acceptor. Substrate is bound at residue Lys-177. 3 residues coordinate Mg(2+): Lys-201, Asp-203, and Glu-204. Lys-201 carries the post-translational modification N6-carboxylysine. His-294 functions as the Proton acceptor in the catalytic mechanism. Residues Arg-295, His-327, and Ser-379 each contribute to the substrate site.

Belongs to the RuBisCO large chain family. Type I subfamily. In terms of assembly, heterohexadecamer of 8 large chains and 8 small chains; disulfide-linked. The disulfide link is formed within the large subunit homodimers. Mg(2+) serves as cofactor. Post-translationally, the disulfide bond which can form in the large chain dimeric partners within the hexadecamer appears to be associated with oxidative stress and protein turnover.

Its subcellular location is the plastid. The protein localises to the chloroplast. It catalyses the reaction 2 (2R)-3-phosphoglycerate + 2 H(+) = D-ribulose 1,5-bisphosphate + CO2 + H2O. It carries out the reaction D-ribulose 1,5-bisphosphate + O2 = 2-phosphoglycolate + (2R)-3-phosphoglycerate + 2 H(+). Its function is as follows. RuBisCO catalyzes two reactions: the carboxylation of D-ribulose 1,5-bisphosphate, the primary event in carbon dioxide fixation, as well as the oxidative fragmentation of the pentose substrate in the photorespiration process. Both reactions occur simultaneously and in competition at the same active site. The chain is Ribulose bisphosphate carboxylase large chain from Galium palustre (Common marsh bedstraw).